Reading from the N-terminus, the 77-residue chain is Putative snRNP Sm-like protein (77 aa).

The 70-residue stretch at 8 to 77 folds into the Sm domain; sequence PTLRMMLDYV…DSVVVITPAA (70 aa).

Belongs to the snRNP Sm proteins family.

This Aeropyrum pernix (strain ATCC 700893 / DSM 11879 / JCM 9820 / NBRC 100138 / K1) protein is Putative snRNP Sm-like protein.